We begin with the raw amino-acid sequence, 317 residues long: Phosphatidylglycerol--prolipoprotein diacylglyceryl transferase 2 (317 aa).

Helical transmembrane passes span 19 to 39 (IPLRAYAFCIILGVFAAVWLG), 51 to 71 (GVIADVTLWAVPFGLVGGRLY), 93 to 113 (VWEGGLGIWGAIALGAVGAWI), and 120 to 140 (IPLPAFADAVAPGIVLAQAIG). A 1,2-diacyl-sn-glycero-3-phospho-(1'-sn-glycerol) is bound at residue Arg141. Transmembrane regions (helical) follow at residues 180–200 (PTFLYESLWNIGVAALILWAA), 211–230 (FALYVAAYTVGRFGTEYLRI), and 241–261 (LNNWTSVLVFLGAVACLVVSA). The interval 275-317 (GAGADGRTDDPRPADASVGLASGPPGNSTPRRATESWNVRNRS) is disordered. Residues 299–317 (PGNSTPRRATESWNVRNRS) are compositionally biased toward polar residues.

It belongs to the Lgt family.

It localises to the cell membrane. It carries out the reaction L-cysteinyl-[prolipoprotein] + a 1,2-diacyl-sn-glycero-3-phospho-(1'-sn-glycerol) = an S-1,2-diacyl-sn-glyceryl-L-cysteinyl-[prolipoprotein] + sn-glycerol 1-phosphate + H(+). It participates in protein modification; lipoprotein biosynthesis (diacylglyceryl transfer). Catalyzes the transfer of the diacylglyceryl group from phosphatidylglycerol to the sulfhydryl group of the N-terminal cysteine of a prolipoprotein, the first step in the formation of mature lipoproteins. The polypeptide is Phosphatidylglycerol--prolipoprotein diacylglyceryl transferase 2 (Streptomyces coelicolor (strain ATCC BAA-471 / A3(2) / M145)).